The chain runs to 321 residues: NADH-ubiquinone oxidoreductase chain 1 (321 aa).

A run of 8 helical transmembrane segments spans residues 6 to 26 (IVPP…LTAL), 67 to 87 (LLAT…LALA), 103 to 123 (LGLL…LWSG), 143 to 163 (ISYE…SGGF), 174 to 194 (PLYL…STLA), 220 to 240 (ASPF…MNTL), 256 to 276 (ALFT…FLWV), and 296 to 316 (FLPM…SMFG).

It belongs to the complex I subunit 1 family.

Its subcellular location is the mitochondrion inner membrane. It carries out the reaction a ubiquinone + NADH + 5 H(+)(in) = a ubiquinol + NAD(+) + 4 H(+)(out). In terms of biological role, core subunit of the mitochondrial membrane respiratory chain NADH dehydrogenase (Complex I) that is believed to belong to the minimal assembly required for catalysis. Complex I functions in the transfer of electrons from NADH to the respiratory chain. The immediate electron acceptor for the enzyme is believed to be ubiquinone. The sequence is that of NADH-ubiquinone oxidoreductase chain 1 (MT-ND1) from Alligator mississippiensis (American alligator).